Here is a 425-residue protein sequence, read N- to C-terminus: Terminal nucleotidyltransferase 5B (425 aa).

Residues 1–42 form a disordered region; the sequence is MMPSESGAERRDRAAAQVGTAAATAVATAAPAGGGPDPEALS. Positions 15–31 are enriched in low complexity; that stretch reads AAQVGTAAATAVATAAP.

It belongs to the TENT family.

The protein localises to the cytoplasm. It localises to the nucleus. It catalyses the reaction RNA(n) + ATP = RNA(n)-3'-adenine ribonucleotide + diphosphate. Catalyzes the transfer of one adenosine molecule from an ATP to an mRNA poly(A) tail bearing a 3'-OH terminal group in an ATP hydrolysis-dependent manner. May be involved in maintaining the translation efficiency of at least some genes through preventing degradation of their mRNAs. Prefers RNA molecules that are adenosine-rich close to 3'-end. In addition, may inhibit cell proliferation and cell cycle progression through ubiquitination of beta-catenin/CTNNB1. The sequence is that of Terminal nucleotidyltransferase 5B from Homo sapiens (Human).